A 343-amino-acid chain; its full sequence is 4-hydroxy-3-methylbut-2-enyl diphosphate reductase (343 aa).

C18 provides a ligand contact to [4Fe-4S] cluster. 2 residues coordinate (2E)-4-hydroxy-3-methylbut-2-enyl diphosphate: H47 and H83. The dimethylallyl diphosphate site is built by H47 and H83. 2 residues coordinate isopentenyl diphosphate: H47 and H83. C105 lines the [4Fe-4S] cluster pocket. Residue H133 coordinates (2E)-4-hydroxy-3-methylbut-2-enyl diphosphate. A dimethylallyl diphosphate-binding site is contributed by H133. H133 is an isopentenyl diphosphate binding site. E135 acts as the Proton donor in catalysis. T174 is a binding site for (2E)-4-hydroxy-3-methylbut-2-enyl diphosphate. C204 provides a ligand contact to [4Fe-4S] cluster. (2E)-4-hydroxy-3-methylbut-2-enyl diphosphate-binding residues include S232, S233, N234, and S277. The dimethylallyl diphosphate site is built by S232, S233, N234, and S277. 4 residues coordinate isopentenyl diphosphate: S232, S233, N234, and S277.

This sequence belongs to the IspH family. The cofactor is [4Fe-4S] cluster.

The catalysed reaction is isopentenyl diphosphate + 2 oxidized [2Fe-2S]-[ferredoxin] + H2O = (2E)-4-hydroxy-3-methylbut-2-enyl diphosphate + 2 reduced [2Fe-2S]-[ferredoxin] + 2 H(+). It catalyses the reaction dimethylallyl diphosphate + 2 oxidized [2Fe-2S]-[ferredoxin] + H2O = (2E)-4-hydroxy-3-methylbut-2-enyl diphosphate + 2 reduced [2Fe-2S]-[ferredoxin] + 2 H(+). It functions in the pathway isoprenoid biosynthesis; dimethylallyl diphosphate biosynthesis; dimethylallyl diphosphate from (2E)-4-hydroxy-3-methylbutenyl diphosphate: step 1/1. It participates in isoprenoid biosynthesis; isopentenyl diphosphate biosynthesis via DXP pathway; isopentenyl diphosphate from 1-deoxy-D-xylulose 5-phosphate: step 6/6. In terms of biological role, catalyzes the conversion of 1-hydroxy-2-methyl-2-(E)-butenyl 4-diphosphate (HMBPP) into a mixture of isopentenyl diphosphate (IPP) and dimethylallyl diphosphate (DMAPP). Acts in the terminal step of the DOXP/MEP pathway for isoprenoid precursor biosynthesis. The polypeptide is 4-hydroxy-3-methylbut-2-enyl diphosphate reductase (Bartonella henselae (strain ATCC 49882 / DSM 28221 / CCUG 30454 / Houston 1) (Rochalimaea henselae)).